The chain runs to 371 residues: Cytochrome b (371 aa).

Helical transmembrane passes span 25–45 (FGSMLLACSSMQVLTGFFLAV), 69–90 (WLMQNLHAIGASMFFICIYTHI), 105–125 (WLSGTTLLIMLMATAFFGYVL), and 170–190 (FFALHFILPFGIISLSSLHIM). Heme b-binding residues include H75 and H89. Residues H174 and H188 each contribute to the heme b site. Position 193 (H193) interacts with a ubiquinone. 4 consecutive transmembrane segments (helical) span residues 218-238 (YKDMLMLSLMVLALLTTVAFF), 280-300 (LGGALALVMSIMILLTTPFTH), 312-332 (IMQFMFWTLVATFTVITWAAT), and 339-358 (FTAISQAASTMYFMFFITNP).

It belongs to the cytochrome b family. As to quaternary structure, the cytochrome bc1 complex contains 3 respiratory subunits (MT-CYB, CYC1 and UQCRFS1), 2 core proteins (UQCRC1 and UQCRC2) and probably 6 low-molecular weight proteins. Heme b is required as a cofactor.

It localises to the mitochondrion inner membrane. Functionally, component of the ubiquinol-cytochrome c reductase complex (complex III or cytochrome b-c1 complex) that is part of the mitochondrial respiratory chain. The b-c1 complex mediates electron transfer from ubiquinol to cytochrome c. Contributes to the generation of a proton gradient across the mitochondrial membrane that is then used for ATP synthesis. The protein is Cytochrome b (MT-CYB) of Eryx colubrinus loveridgei.